A 558-amino-acid chain; its full sequence is Atlastin-1 (558 aa).

Positions 1 to 28 (MAKSRRDRNSWGGFSEKSSDWSSEEEEP) are disordered. The N-terminal hypervariable region (HVR) stretch occupies residues 1–34 (MAKSRRDRNSWGGFSEKSSDWSSEEEEPVRKAGP). Residues 1–449 (MAKSRRDRNS…NIFHAARTPA (449 aa)) are Cytoplasmic-facing. 3 positions are modified to phosphoserine: Ser-10, Ser-22, and Ser-23. The GB1/RHD3-type G domain maps to 64–309 (DKEVVAVSVA…LIPWLLSPER (246 aa)). 11 residues coordinate GDP: Arg-77, Lys-78, Gly-79, Lys-80, Ser-81, Phe-82, Gln-148, Arg-217, Asp-218, Val-276, and Asn-279. GTP contacts are provided by Arg-77, Lys-78, Gly-79, Lys-80, Ser-81, and Phe-82. Residue Ser-81 coordinates Mg(2+). GTP-binding residues include Arg-217, Asp-218, and Val-276. A 3HB (three-helix bundle) domain region spans residues 347 to 438 (MLQATAEANN…YIQYIKHNDS (92 aa)). Lys-395 carries the post-translational modification N6-acetyllysine. Residues 412–439 (EFSRRYLQQLESEIDELYIQYIKHNDSK) adopt a coiled-coil conformation. The segment at 439 to 447 (KNIFHAART) is linker. A helical membrane pass occupies residues 450 to 470 (TLFVVIFITYVIAGVTGFIGL). A topological domain (lumenal) is located at residue Asp-471. A helical transmembrane segment spans residues 472-492 (IIASLCNMIMGLTLITLCTWA). Over 493–558 (YIRYSGEYRE…PTQQPEKKKI (66 aa)) the chain is Cytoplasmic. The segment at 521-558 (NEALYKLYSAAATHRHLCHQAFPAPKSEPTQQPEKKKI) is autoinhibitory domain.

This sequence belongs to the TRAFAC class dynamin-like GTPase superfamily. GB1/RHD3 GTPase family. GB1 subfamily. As to quaternary structure, monomeric and homodimeric. The homodimer, transiently formed by two molecules on opposing membranes, is the active form mediating ER membrane fusion. Interacts with REEP1, REEP5, RTN3 and RTN4 (via the transmembrane region); these proteins are involved in endoplasmic reticulum tubular network organization. Interacts with ZFYVE27; both proteins are involved in endoplasmic reticulum tubular network organization. Interacts with ARL6IP1; both proteins are involved in endoplasmic reticulum tubular network organization. Interacts with SPAST; the interaction is direct, could recruit SPAST to Golgi membranes. Interacts (via N-terminal region) with MAP4K4 (via CNH regulatory domain). May interact with TMED2. Interacts with CPT1C. Post-translationally, phosphorylated. Phosphorylation, by different kinases, of the N-terminal hypervariable region (HVR) regulates the ATL1-mediated membrane tethering step.

Its subcellular location is the endoplasmic reticulum membrane. The protein resides in the golgi apparatus membrane. It is found in the cell projection. The protein localises to the axon. The enzyme catalyses GTP + H2O = GDP + phosphate + H(+). Its function is as follows. Atlastin-1 (ATL1) is a membrane-anchored GTPase that mediates the GTP-dependent fusion of endoplasmic reticulum (ER) membranes, maintaining the continuous ER network. It facilitates the formation of three-way junctions where ER tubules intersect. Two atlastin-1 on neighboring ER tubules bind GTP and form loose homodimers through the GB1/RHD3-type G domains and 3HB regions. Upon GTP hydrolysis, the 3HB regions tighten, pulling the membranes together to drive their fusion. After fusion, the homodimer disassembles upon release of inorganic phosphate (Pi). Subsequently, GDP dissociates, resetting the monomers to a conformation ready for a new fusion cycle. May also regulate more or less directly Golgi biogenesis. Indirectly regulates axonal development. The sequence is that of Atlastin-1 from Mus musculus (Mouse).